Here is a 220-residue protein sequence, read N- to C-terminus: MTQDELKKAAAIAALDYVENGMIVGVGTGSTVNHFIDGLAGIKGRIAGAVSSSEASARRLQAHGIPVLDLNDITDLPVYVDGADEIDGGFCMIKGGGGALTREKIVAAVARRFICICDASKKVACLGRFPLPVEIIPMARAYVERELVRIGGRPELREGFVTDNGNLIVDVHGLMITSPRALETELNQIVGVVTNGLFARRGADVLLLATLAGVERQVAN.

Residues 28 to 31 (TGST), 81 to 84 (DGAD), and 94 to 97 (KGGG) each bind substrate. The Proton acceptor role is filled by E103. Position 121 (K121) interacts with substrate.

Belongs to the ribose 5-phosphate isomerase family. In terms of assembly, homodimer.

The enzyme catalyses aldehydo-D-ribose 5-phosphate = D-ribulose 5-phosphate. It functions in the pathway carbohydrate degradation; pentose phosphate pathway; D-ribose 5-phosphate from D-ribulose 5-phosphate (non-oxidative stage): step 1/1. Catalyzes the reversible conversion of ribose-5-phosphate to ribulose 5-phosphate. The protein is Ribose-5-phosphate isomerase A of Aromatoleum aromaticum (strain DSM 19018 / LMG 30748 / EbN1) (Azoarcus sp. (strain EbN1)).